The primary structure comprises 340 residues: Protein-arginine kinase (340 aa).

A Phosphagen kinase C-terminal domain is found at 14–241 (IVLSSRIRLA…YQIINQEKLA (228 aa)). ATP contacts are provided by residues 17–21 (SSRIR), Arg112, 163–167 (RASVM), and 194–199 (RGIYGE).

It belongs to the ATP:guanido phosphotransferase family.

The catalysed reaction is L-arginyl-[protein] + ATP = N(omega)-phospho-L-arginyl-[protein] + ADP + H(+). Catalyzes the specific phosphorylation of arginine residues in proteins. This chain is Protein-arginine kinase, found in Clostridium tetani (strain Massachusetts / E88).